The following is a 106-amino-acid chain: Large ribosomal subunit protein uL24 (106 aa).

It belongs to the universal ribosomal protein uL24 family. Part of the 50S ribosomal subunit.

Its function is as follows. One of two assembly initiator proteins, it binds directly to the 5'-end of the 23S rRNA, where it nucleates assembly of the 50S subunit. In terms of biological role, one of the proteins that surrounds the polypeptide exit tunnel on the outside of the subunit. The polypeptide is Large ribosomal subunit protein uL24 (Clostridium acetobutylicum (strain ATCC 824 / DSM 792 / JCM 1419 / IAM 19013 / LMG 5710 / NBRC 13948 / NRRL B-527 / VKM B-1787 / 2291 / W)).